A 216-amino-acid chain; its full sequence is MAFIIAVDGPAASGKGTVASRLAKLYDYPMLDTGLLYRAVGVRLLDADGDPDDPVAAEVSARELDISELERPEVRTRAAGEAASRVAVHPGVRAALFDLQRDFALREPGCVIDGRDIGTVIAPEAPAKLYVSASPEVRADRRWKQLLGQGESVTLDEVLADIRKRDERDGGRASAPMTQAPDAVLLDTSEMTIEQAFDAARRIVETARARWGNPKG.

9–17 (GPAASGKGT) contributes to the ATP binding site.

It belongs to the cytidylate kinase family. Type 1 subfamily.

It is found in the cytoplasm. It catalyses the reaction CMP + ATP = CDP + ADP. It carries out the reaction dCMP + ATP = dCDP + ADP. The sequence is that of Cytidylate kinase from Caulobacter sp. (strain K31).